Consider the following 1283-residue polypeptide: Bifunctional dioxygenase (DOX)-epoxy alcohol synthase (EAS) (1283 aa).

Positions 1-64 are disordered; it reads MAEHKNGVAT…LPKEMGDGSY (64 aa). The tract at residues 130-476 is fatty acid alpha-dioxygenase; sequence TNSFISQLWN…DGKFNDDELV (347 aa). His227 contributes to the heme b binding site. Residue Tyr405 is part of the active site. Position 408 (His408) interacts with heme b. The interval 684–1108 is epoxy alcohol synthase; that stretch reads INIIGYNAAK…WDDGCGTDLF (425 aa). Residue Cys1035 coordinates heme.

This sequence in the N-terminal section; belongs to the peroxidase family. In the C-terminal section; belongs to the cytochrome P450 family. Homotetramer. It depends on heme b as a cofactor. Requires heme as cofactor.

It catalyses the reaction (9Z,12Z)-octadecadienoate + O2 = (8E,10R,12Z)-10-hydroperoxyoctadeca-8,12-dienoate. It carries out the reaction (8E,10R,12Z)-10-hydroperoxyoctadeca-8,12-dienoate = (12S,13R)-epoxy-(10R)-hydroxy-(8E)-octadecenoate. The catalysed reaction is (9Z)-octadecenoate + O2 = (8R)-hydroperoxy-(9Z)-octadecenoate. In terms of biological role, bifunctional dioxygenase (DOX)-epoxy alcohol synthase (EAS) that converts linoleic acid (18:2n-6) sequentially to 10(R)-hydroperoxy-8(E),12(Z)-octadecadienoic acid (10R-HPODE) and 10R-HPODE further to 12(13)-epoxy-10-hydroxy-8(E)-octa-decenoic acid as the end product. Linoleic acid is oxidized mainly to the R stereoisomer of 10-HPODE. The dioxygenase domain is also able to oygenate position C-8 of linoleic acid to produce 8(R)-hydroperoxy-8(E),12(Z)-octadecadienoic acid (8R-HPODE). The protein is Bifunctional dioxygenase (DOX)-epoxy alcohol synthase (EAS) of Fusarium oxysporum (strain Fo5176) (Fusarium vascular wilt).